A 349-amino-acid chain; its full sequence is Ferredoxin--NADP reductase 1 (349 aa).

7 residues coordinate FAD: Glu36, Lys44, Tyr48, Ile88, Leu123, Asp290, and Ser331.

Belongs to the ferredoxin--NADP reductase type 2 family. In terms of assembly, homodimer. The cofactor is FAD.

It carries out the reaction 2 reduced [2Fe-2S]-[ferredoxin] + NADP(+) + H(+) = 2 oxidized [2Fe-2S]-[ferredoxin] + NADPH. The polypeptide is Ferredoxin--NADP reductase 1 (Bacillus thuringiensis (strain Al Hakam)).